Here is a 360-residue protein sequence, read N- to C-terminus: Peptide chain release factor 1 (360 aa).

The residue at position 236 (Gln-236) is an N5-methylglutamine.

It belongs to the prokaryotic/mitochondrial release factor family. In terms of processing, methylated by PrmC. Methylation increases the termination efficiency of RF1.

The protein resides in the cytoplasm. Functionally, peptide chain release factor 1 directs the termination of translation in response to the peptide chain termination codons UAG and UAA. The protein is Peptide chain release factor 1 of Limosilactobacillus reuteri subsp. reuteri (strain JCM 1112) (Lactobacillus reuteri).